The primary structure comprises 118 residues: MRNKYIQAFEDAQIASKSVPDFRAGDTLRVAIRIHEGDKTRVQNFEGICIARRGSGVGETFIIRKIGANSVGVERIFPIYSDSIEEIVVLRKGRVRRAKLFYLRDLRGKAAKIRELRK.

This sequence belongs to the bacterial ribosomal protein bL19 family.

In terms of biological role, this protein is located at the 30S-50S ribosomal subunit interface and may play a role in the structure and function of the aminoacyl-tRNA binding site. This Campylobacter curvus (strain 525.92) protein is Large ribosomal subunit protein bL19.